The following is a 234-amino-acid chain: S-adenosylmethionine synthase 1 (234 aa).

ATP-binding positions include 10–12 (DGK), 78–81 (SGRF), D89, 95–96 (RK), A112, K116, and K120. D89 serves as a coordination point for L-methionine. An L-methionine-binding site is contributed by K120.

It belongs to the AdoMet synthase family. Homotetramer. Requires Mn(2+) as cofactor. It depends on Mg(2+) as a cofactor. The cofactor is Co(2+). K(+) serves as cofactor. Mainly in floral buds and roots.

It is found in the cytoplasm. The catalysed reaction is L-methionine + ATP + H2O = S-adenosyl-L-methionine + phosphate + diphosphate. The protein operates within amino-acid biosynthesis; S-adenosyl-L-methionine biosynthesis; S-adenosyl-L-methionine from L-methionine: step 1/1. Its function is as follows. Catalyzes the formation of S-adenosylmethionine from methionine and ATP. The reaction comprises two steps that are both catalyzed by the same enzyme: formation of S-adenosylmethionine (AdoMet) and triphosphate, and subsequent hydrolysis of the triphosphate. The sequence is that of S-adenosylmethionine synthase 1 (SMS-1) from Petroselinum crispum (Parsley).